The following is an 882-amino-acid chain: Lon protease homolog, mitochondrial (882 aa).

The N-terminal 34 residues, 1–34 (MIHVLKSRSTLLTASSIVRTSVGSSSRYSQTRTY), are a transit peptide targeting the mitochondrion. The 214-residue stretch at 68–281 (TLGLPLVSRP…KALVLLNRER (214 aa)) folds into the Lon N-terminal domain. Residue 435 to 442 (GPPGTGKT) participates in ATP binding. The region spanning 687–878 (PLPHGIVMGL…DKVYEVAFSS (192 aa)) is the Lon proteolytic domain. Active-site residues include serine 784 and lysine 827.

The protein belongs to the peptidase S16 family. As to quaternary structure, homohexamer or homoheptamer. Organized in a ring with a central cavity.

It is found in the mitochondrion matrix. The enzyme catalyses Hydrolysis of proteins in presence of ATP.. Its function is as follows. ATP-dependent serine protease that mediates the selective degradation of misfolded, unassembled or oxidatively damaged polypeptides as well as certain short-lived regulatory proteins in the mitochondrial matrix. May also have a chaperone function in the assembly of inner membrane protein complexes. Participates in the regulation of mitochondrial gene expression and in the maintenance of the integrity of the mitochondrial genome. Binds to mitochondrial DNA in a site-specific manner. This chain is Lon protease homolog, mitochondrial, found in Phaeodactylum tricornutum (strain CCAP 1055/1).